A 319-amino-acid polypeptide reads, in one-letter code: Taste receptor type 2 member 30 (319 aa).

Position 1 (methionine 1) is a topological domain, extracellular. The helical transmembrane segment at 2 to 22 (ITFLPIIFSILIVVIFVIGNF) threads the bilayer. The Cytoplasmic segment spans residues 23 to 46 (ANGFIALVNSIEWVKRQKISFADQ). Residues 47-67 (ILIALAVSRVGLLWALLLHWY) form a helical membrane-spanning segment. Residues 68-86 (ATELNLAFYSVEVRITAYN) lie on the Extracellular side of the membrane. Residues 87 to 107 (VWAVTNHFSNWLATSLSMFYL) traverse the membrane as a helical segment. At 108–126 (LKIANFSNLIFLRIKRRVK) the chain is on the cytoplasmic side. The helical transmembrane segment at 127 to 147 (SVILVILLGPLLFLVCHLFVI) threads the bilayer. Over 148–178 (NMNEIVWTKEYEGNLTWKIKLRNAVFLSNMT) the chain is Extracellular. 2 N-linked (GlcNAc...) asparagine glycosylation sites follow: asparagine 161 and asparagine 176. Residues 179–199 (LTMLANFVPLTLTLISFLLLI) traverse the membrane as a helical segment. Residues 200 to 229 (CSLCKHLKKMQLHGKGSQDPSTKVHIKALQ) are Cytoplasmic-facing. A helical membrane pass occupies residues 230–250 (TVTCFLLLCAIYFLSMIISVY). Over 251–259 (NFGRLEKKP) the chain is Extracellular. A helical membrane pass occupies residues 260–280 (VFMFCQAITFSYPSTHAFILI). Residues 281-319 (WGNKKLKQIFLSVLWHVRYWVKDRSLRLHRFTRAALCKG) lie on the Cytoplasmic side of the membrane.

This sequence belongs to the G-protein coupled receptor T2R family.

Its subcellular location is the membrane. Receptor that may play a role in the perception of bitterness and is gustducin-linked. May play a role in sensing the chemical composition of the gastrointestinal content. The activity of this receptor may stimulate alpha gustducin, mediate PLC-beta-2 activation and lead to the gating of TRPM5. The sequence is that of Taste receptor type 2 member 30 (TAS2R30) from Pongo pygmaeus (Bornean orangutan).